A 713-amino-acid chain; its full sequence is Leucine-rich repeat neuronal protein 2 (713 aa).

Positions 1–18 (MRLLVAPLLLAWVAGATA) are cleaved as a signal peptide. Residues 19-630 (AVPVVPWHVP…CHRALGDRPG (612 aa)) lie on the Extracellular side of the membrane. The LRRNT domain maps to 20 to 69 (VPVVPWHVPCPPQCACQIRPWYTPRSSYREATTVDCNDLFLTAVPPALPA). 12 LRR repeats span residues 70-91 (GTQT…ELGY), 94-115 (NLTE…DFHA), 118-139 (QLLS…SFAG), 142-163 (SLQE…AFSG), 166-187 (NLLR…WFEM), 190-211 (NLEI…NFRP), 214-235 (NLRS…ALEG), 238-259 (SLES…ALEQ), 262-283 (GLKF…DFAN), 286-305 (HLKE…DKFA), 311-333 (ELTK…AFHH), and 336-357 (QMET…TVES). A glycan (N-linked (GlcNAc...) asparagine) is linked at Asn94. An LRRCT domain is found at 369–422 (NPIRCDCVIRWANATGTRVRFIEPQSTLCAEPPDLQRLPVREVPFREMTDHCLP). Residue Asn381 is glycosylated (N-linked (GlcNAc...) asparagine). Positions 422–511 (PLISPRSFPP…LVGADTKTVS (90 aa)) constitute an Ig-like C2-type domain. A disulfide bond links Cys445 and Cys497. N-linked (GlcNAc...) asparagine glycans are attached at residues Asn555 and Asn583. A helical transmembrane segment spans residues 631-651 (LIAILALAVLLLAAGLAAHLG). Residues 652–713 (TGQPRKGVGG…TLLPPLSQNS (62 aa)) lie on the Cytoplasmic side of the membrane.

Overamplified in malignant gliomas.

The protein resides in the membrane. This is Leucine-rich repeat neuronal protein 2 (LRRN2) from Homo sapiens (Human).